Consider the following 250-residue polypeptide: 2,3-bisphosphoglycerate-dependent phosphoglycerate mutase (250 aa).

Substrate-binding positions include 10 to 17 (RHGESQWN), 23 to 24 (TG), Arg62, 89 to 92 (ERHY), Lys100, 116 to 117 (RR), and 185 to 186 (GN). Residue His11 is the Tele-phosphohistidine intermediate of the active site. Glu89 serves as the catalytic Proton donor/acceptor.

It belongs to the phosphoglycerate mutase family. BPG-dependent PGAM subfamily. In terms of assembly, homodimer.

The enzyme catalyses (2R)-2-phosphoglycerate = (2R)-3-phosphoglycerate. Its pathway is carbohydrate degradation; glycolysis; pyruvate from D-glyceraldehyde 3-phosphate: step 3/5. Functionally, catalyzes the interconversion of 2-phosphoglycerate and 3-phosphoglycerate. The protein is 2,3-bisphosphoglycerate-dependent phosphoglycerate mutase of Citrobacter koseri (strain ATCC BAA-895 / CDC 4225-83 / SGSC4696).